We begin with the raw amino-acid sequence, 562 residues long: NAD-dependent malic enzyme (562 aa).

The active-site Proton donor is Tyr101. Arg154 lines the NAD(+) pocket. Lys172 functions as the Proton acceptor in the catalytic mechanism. The a divalent metal cation site is built by Glu243, Asp244, and Asp267. NAD(+) is bound by residues Asp267 and Asn415.

It belongs to the malic enzymes family. Homotetramer. It depends on Mg(2+) as a cofactor. Mn(2+) serves as cofactor.

The enzyme catalyses (S)-malate + NAD(+) = pyruvate + CO2 + NADH. The catalysed reaction is oxaloacetate + H(+) = pyruvate + CO2. In Aliivibrio salmonicida (strain LFI1238) (Vibrio salmonicida (strain LFI1238)), this protein is NAD-dependent malic enzyme.